An 847-amino-acid polypeptide reads, in one-letter code: DNA mismatch repair protein MutS (847 aa).

602–609 (GPNMSGKS) contacts ATP.

This sequence belongs to the DNA mismatch repair MutS family.

Its function is as follows. This protein is involved in the repair of mismatches in DNA. It is possible that it carries out the mismatch recognition step. This protein has a weak ATPase activity. The polypeptide is DNA mismatch repair protein MutS (Streptococcus uberis (strain ATCC BAA-854 / 0140J)).